The primary structure comprises 58 residues: Small ribosomal subunit protein bS21 (58 aa).

This sequence belongs to the bacterial ribosomal protein bS21 family.

The chain is Small ribosomal subunit protein bS21 from Prochlorococcus marinus (strain MIT 9515).